The primary structure comprises 2108 residues: Mucin-5B (2108 aa).

The first 21 residues, 1-21 (MEIKKERSFWIFCLIWSFCKG), serve as a signal peptide directing secretion. The VWFD 1 domain occupies 36 to 203 (SECTTWGNFH…KVEDPSEKCP (168 aa)). 2 cysteine pairs are disulfide-bonded: cysteine 38/cysteine 166 and cysteine 60/cysteine 202. Positions 196-219 (EDPSEKCPDVRPDDHTGRHPTEDD) are disordered. Positions 304–360 (CPSNMEYMECGNSCADTCADPERSKICKAPCTDGCFCPPGTILDDLGGKKCVPRDSC) constitute a TIL 1 domain. N-linked (GlcNAc...) (complex) asparagine glycosylation occurs at asparagine 381. In terms of domain architecture, VWFD 2 spans 398–570 (GSCSIDGGFH…NSWKTRASCF (173 aa)). 3 disulfides stabilise this stretch: cysteine 400-cysteine 534, cysteine 422-cysteine 569, and cysteine 443-cysteine 451. 4 N-linked (GlcNAc...) (complex) asparagine glycosylation sites follow: asparagine 528, asparagine 599, asparagine 680, and asparagine 772. One can recognise a TIL 2 domain in the interval 666–723 (CPETMVYNYSVKYCNQSCRSLDEPDPLCKVQIAPMEGCGCPEGTYLNDEEECVTPDDC). The TIL 3 domain maps to 782–825 (GSECQKSCKTQDMHCYVTECVSGCMCPDGLVLDGSGGCIPKDQC). The VWFC 1 domain maps to 825 to 897 (CPCVHGGHFY…DYILAQDFCP (73 aa)). Residue asparagine 855 is glycosylated (N-linked (GlcNAc...) (complex) asparagine). The VWFD 3 domain maps to 863–1033 (GTCTVYGNGH…NSWKITSTCS (171 aa)). 4 cysteine pairs are disulfide-bonded: cysteine 865–cysteine 997, cysteine 887–cysteine 1032, cysteine 896–cysteine 994, and cysteine 914–cysteine 921. Asparagine 1036, asparagine 1219, asparagine 1371, and asparagine 1452 each carry an N-linked (GlcNAc...) (complex) asparagine glycan. One can recognise a VWFD 4 domain in the interval 1429-1613 (CICSGWGNEH…APVSTNRYCN (185 aa)). 3 disulfides stabilise this stretch: cysteine 1431–cysteine 1573, cysteine 1453–cysteine 1612, and cysteine 1477–cysteine 1485. N-linked (GlcNAc...) (complex) asparagine glycans are attached at residues asparagine 1567, asparagine 1639, asparagine 1792, asparagine 1807, and asparagine 1841. Positions 1761 to 1832 (CGCTAQDGSV…DPCCTETVCE (72 aa)) constitute a VWFC 2 domain. Residues 1870–1937 (GVCVSEGVEF…KEGQCCSQCQ (68 aa)) enclose the VWFC 3 domain. An N-linked (GlcNAc...) (complex) asparagine glycan is attached at asparagine 1964. 4 disulfide bridges follow: cysteine 2010/cysteine 2066, cysteine 2031/cysteine 2080, cysteine 2042/cysteine 2096, and cysteine 2046/cysteine 2098. One can recognise a CTCK domain in the interval 2010–2104 (CIDLPHKCKR…ECGCVETKCP (95 aa)).

As to quaternary structure, homomultimer; disulfide-linked. The N- and C-terminus mediate their assembly into higher order structures to form filaments. The CTCK domains of two polypeptides associate in the endoplasmic reticulum to generate intermolecularly disulfide-bonded dimers. These dimers progress to the Golgi apparatus, which is a more acidic environment than the endoplasmic reticulum. Under acidic conditions, the N-termini form non-covalent intermolecular interactions that juxtapose assemblies from different CTCK-linked dimers to produce long, disulfide-linked polymers that remain highly compact until secretion. N-glycosylated. Complex glycosylation with bisecting N-acetylglucosamine. Contains mainly N-acetylglucosamine (3.1-8.5%), mannose (2.9-4.6%), a small amount of galactose (1.1-4.35) and sialic acid (0.3-1.3%). Most abundant glycan is composed of a GlcNAc(2)Man(3) core, a bisecting GlcNAc and another 3 GlcNAc antannae located on the mannoses of the core. Site Asn-1639 exists both in glycosylated and non-glycosylated forms.

It is found in the secreted. Ovomucin, the glycoprotein responsible for the gel properties of egg white, is composed for 2 subunits, alpha-ovomucin/MUC5B and beta-ovomucin/MUC6. This is Mucin-5B (MUC5B) from Gallus gallus (Chicken).